The following is a 236-amino-acid chain: Ribosome assembly factor MRT4 (236 aa).

The protein belongs to the universal ribosomal protein uL10 family. In terms of assembly, associates with the pre-60S ribosomal particle.

It localises to the nucleus. The protein resides in the nucleolus. It is found in the cytoplasm. Functionally, component of the ribosome assembly machinery. Nuclear paralog of the ribosomal protein P0, it binds pre-60S subunits at an early stage of assembly in the nucleolus, and is replaced by P0 in cytoplasmic pre-60S subunits and mature 80S ribosomes. The sequence is that of Ribosome assembly factor MRT4 from Saccharomyces cerevisiae (strain ATCC 204508 / S288c) (Baker's yeast).